Here is a 260-residue protein sequence, read N- to C-terminus: 3'-5' ssDNA/RNA exonuclease TatD (260 aa).

A divalent metal cation contacts are provided by E92, H128, and H153.

This sequence belongs to the metallo-dependent hydrolases superfamily. TatD-type hydrolase family. TatD subfamily. In terms of assembly, monomer. Mg(2+) is required as a cofactor.

Its subcellular location is the cytoplasm. Functionally, 3'-5' exonuclease that prefers single-stranded DNA and RNA. May play a role in the H(2)O(2)-induced DNA damage repair. This is 3'-5' ssDNA/RNA exonuclease TatD from Pectobacterium atrosepticum (strain SCRI 1043 / ATCC BAA-672) (Erwinia carotovora subsp. atroseptica).